Consider the following 433-residue polypeptide: 3-phosphoshikimate 1-carboxyvinyltransferase (433 aa).

3-phosphoshikimate-binding residues include K23, S24, and R28. Residue K23 participates in phosphoenolpyruvate binding. The phosphoenolpyruvate site is built by G95 and R123. 3-phosphoshikimate contacts are provided by S167, Q169, D317, and K344. Q169 lines the phosphoenolpyruvate pocket. D317 (proton acceptor) is an active-site residue. Phosphoenolpyruvate-binding residues include R348 and R390.

This sequence belongs to the EPSP synthase family. Monomer.

It localises to the cytoplasm. It carries out the reaction 3-phosphoshikimate + phosphoenolpyruvate = 5-O-(1-carboxyvinyl)-3-phosphoshikimate + phosphate. It functions in the pathway metabolic intermediate biosynthesis; chorismate biosynthesis; chorismate from D-erythrose 4-phosphate and phosphoenolpyruvate: step 6/7. Catalyzes the transfer of the enolpyruvyl moiety of phosphoenolpyruvate (PEP) to the 5-hydroxyl of shikimate-3-phosphate (S3P) to produce enolpyruvyl shikimate-3-phosphate and inorganic phosphate. The chain is 3-phosphoshikimate 1-carboxyvinyltransferase from Staphylococcus epidermidis (strain ATCC 12228 / FDA PCI 1200).